The primary structure comprises 147 residues: UPF0306 protein YPK_3704 (147 aa).

It belongs to the UPF0306 family.

The chain is UPF0306 protein YPK_3704 from Yersinia pseudotuberculosis serotype O:3 (strain YPIII).